Consider the following 145-residue polypeptide: MNRVVLIGRLTKDPELKFTPGTGTAVTTFVLAVDRRFSKDGKNEADFIPVVVWGKQAESTANYMSKGKLIGISGRIQTRSYEAKDGTRRYVTEVVADEVKFLEWGNKQSSGSQGFNNFESDPLSYNNEDNYNDDITPVDEGEVPF.

Residues 1-103 form the SSB domain; it reads MNRVVLIGRL…VVADEVKFLE (103 aa). Over residues 112-129 the composition is skewed to polar residues; it reads SQGFNNFESDPLSYNNED. The segment at 112 to 145 is disordered; that stretch reads SQGFNNFESDPLSYNNEDNYNDDITPVDEGEVPF. Over residues 130 to 145 the composition is skewed to acidic residues; sequence NYNDDITPVDEGEVPF.

In terms of assembly, homotetramer.

The sequence is that of Single-stranded DNA-binding protein (ssb) from Clostridium tetani (strain Massachusetts / E88).